A 263-amino-acid chain; its full sequence is Shikimate dehydrogenase (NADP(+)) (263 aa).

Shikimate contacts are provided by residues 16 to 18 (SKS) and Thr-65. The active-site Proton acceptor is Lys-69. Asn-90 and Asp-105 together coordinate shikimate. Residues 125–129 (GSGGS) and Leu-208 each bind NADP(+). Tyr-210 lines the shikimate pocket. NADP(+) is bound at residue Gly-230.

The protein belongs to the shikimate dehydrogenase family. As to quaternary structure, homodimer.

It carries out the reaction shikimate + NADP(+) = 3-dehydroshikimate + NADPH + H(+). The protein operates within metabolic intermediate biosynthesis; chorismate biosynthesis; chorismate from D-erythrose 4-phosphate and phosphoenolpyruvate: step 4/7. Involved in the biosynthesis of the chorismate, which leads to the biosynthesis of aromatic amino acids. Catalyzes the reversible NADPH linked reduction of 3-dehydroshikimate (DHSA) to yield shikimate (SA). This Helicobacter pylori (strain P12) protein is Shikimate dehydrogenase (NADP(+)).